A 237-amino-acid chain; its full sequence is tRNA1(Val) (adenine(37)-N6)-methyltransferase (237 aa).

Belongs to the methyltransferase superfamily. tRNA (adenine-N(6)-)-methyltransferase family.

The protein resides in the cytoplasm. The enzyme catalyses adenosine(37) in tRNA1(Val) + S-adenosyl-L-methionine = N(6)-methyladenosine(37) in tRNA1(Val) + S-adenosyl-L-homocysteine + H(+). Specifically methylates the adenine in position 37 of tRNA(1)(Val) (anticodon cmo5UAC). This chain is tRNA1(Val) (adenine(37)-N6)-methyltransferase, found in Bacteroides fragilis (strain YCH46).